Reading from the N-terminus, the 129-residue chain is Small ribosomal subunit protein uS11 (129 aa).

It belongs to the universal ribosomal protein uS11 family. As to quaternary structure, part of the 30S ribosomal subunit. Interacts with proteins S7 and S18. Binds to IF-3.

Functionally, located on the platform of the 30S subunit, it bridges several disparate RNA helices of the 16S rRNA. Forms part of the Shine-Dalgarno cleft in the 70S ribosome. This Beijerinckia indica subsp. indica (strain ATCC 9039 / DSM 1715 / NCIMB 8712) protein is Small ribosomal subunit protein uS11.